A 499-amino-acid polypeptide reads, in one-letter code: Glycerol kinase (499 aa).

Position 12 (T12) interacts with ADP. T12, T13, and S14 together coordinate ATP. T12 is a binding site for sn-glycerol 3-phosphate. R16 contacts ADP. R82, E83, Y134, and D245 together coordinate sn-glycerol 3-phosphate. 5 residues coordinate glycerol: R82, E83, Y134, D245, and Q246. ADP is bound by residues T267 and G311. Positions 267, 311, 315, and 412 each coordinate ATP. ADP contacts are provided by G412 and N416.

The protein belongs to the FGGY kinase family.

It catalyses the reaction glycerol + ATP = sn-glycerol 3-phosphate + ADP + H(+). It participates in polyol metabolism; glycerol degradation via glycerol kinase pathway; sn-glycerol 3-phosphate from glycerol: step 1/1. Its activity is regulated as follows. Inhibited by fructose 1,6-bisphosphate (FBP). Key enzyme in the regulation of glycerol uptake and metabolism. Catalyzes the phosphorylation of glycerol to yield sn-glycerol 3-phosphate. This is Glycerol kinase from Brucella anthropi (strain ATCC 49188 / DSM 6882 / CCUG 24695 / JCM 21032 / LMG 3331 / NBRC 15819 / NCTC 12168 / Alc 37) (Ochrobactrum anthropi).